A 161-amino-acid chain; its full sequence is MELPAVNLKVILLVHWLLTTWGCLVFSSSYAWGNFTILALGVWAVAQRDSIDAIGMFLGGLVATIFLDIIYISIFYSSVATGDTGRFGAGMAILSLLLKPFSCCLVYHMHRERGGELPLRPDFFGPSQEHSAYQTIDSSSDAAADPFASLENKGQAVPRGY.

The Extracellular segment spans residues 1-26 (MELPAVNLKVILLVHWLLTTWGCLVF). Residues 27 to 47 (SSSYAWGNFTILALGVWAVAQ) traverse the membrane as a helical segment. The Cytoplasmic segment spans residues 48–53 (RDSIDA). The chain crosses the membrane as a helical span at residues 54–74 (IGMFLGGLVATIFLDIIYISI). The Extracellular portion of the chain corresponds to 75-86 (FYSSVATGDTGR). The chain crosses the membrane as a helical span at residues 87–107 (FGAGMAILSLLLKPFSCCLVY). The Cytoplasmic portion of the chain corresponds to 108-161 (HMHRERGGELPLRPDFFGPSQEHSAYQTIDSSSDAAADPFASLENKGQAVPRGY). Residues 110–122 (HRERGGELPLRPD) form an interaction with AGTR1 region. Phosphoserine is present on Ser127. Position 135 is a phosphothreonine (Thr135). Ser138 is subject to Phosphoserine.

As to quaternary structure, interacts with RACK1, and with the C-terminal region of AGTR1. As to expression, ubiquitous but more abundant in kidney, testis and heart.

Its subcellular location is the endoplasmic reticulum membrane. It is found in the golgi apparatus membrane. The protein resides in the cytoplasmic vesicle membrane. In terms of biological role, appears to be a negative regulator of type-1 angiotensin II receptor-mediated signaling by regulating receptor internalization as well as mechanism of receptor desensitization such as phosphorylation. Also induces a decrease in angiotensin II-stimulated transcriptional activity. May play a role of negative regulator in cardiomyocyte hypertrophy induced by angiotensin II through an inhibition of p38 mitogen-activated protein kinase pathway. The sequence is that of Type-1 angiotensin II receptor-associated protein (Agtrap) from Mus musculus (Mouse).